The following is a 477-amino-acid chain: ATP synthase subunit beta (477 aa).

An ATP-binding site is contributed by 163 to 170; sequence GGAGVGKT.

Belongs to the ATPase alpha/beta chains family. In terms of assembly, F-type ATPases have 2 components, CF(1) - the catalytic core - and CF(0) - the membrane proton channel. CF(1) has five subunits: alpha(3), beta(3), gamma(1), delta(1), epsilon(1). CF(0) has four main subunits: a(1), b(1), b'(1) and c(9-12).

It localises to the cellular thylakoid membrane. It carries out the reaction ATP + H2O + 4 H(+)(in) = ADP + phosphate + 5 H(+)(out). Produces ATP from ADP in the presence of a proton gradient across the membrane. The catalytic sites are hosted primarily by the beta subunits. This Synechococcus sp. (strain JA-2-3B'a(2-13)) (Cyanobacteria bacterium Yellowstone B-Prime) protein is ATP synthase subunit beta.